The following is a 78-amino-acid chain: Sec-independent protein translocase protein TatA (78 aa).

A helical membrane pass occupies residues 1–21; that stretch reads MGSLSIWHWIVVIAVVLLLFG. Basic and acidic residues predominate over residues 43-60; sequence LQDDEKTAEKSEPVKSID. Residues 43–78 form a disordered region; sequence LQDDEKTAEKSEPVKSIDHTSTPGATNRTDVGSKAV. Residues 61 to 72 show a composition bias toward polar residues; that stretch reads HTSTPGATNRTD.

Belongs to the TatA/E family. In terms of assembly, the Tat system comprises two distinct complexes: a TatABC complex, containing multiple copies of TatA, TatB and TatC subunits, and a separate TatA complex, containing only TatA subunits. Substrates initially bind to the TatABC complex, which probably triggers association of the separate TatA complex to form the active translocon.

The protein localises to the cell inner membrane. Part of the twin-arginine translocation (Tat) system that transports large folded proteins containing a characteristic twin-arginine motif in their signal peptide across membranes. TatA could form the protein-conducting channel of the Tat system. The polypeptide is Sec-independent protein translocase protein TatA (Rhodopseudomonas palustris (strain ATCC BAA-98 / CGA009)).